Reading from the N-terminus, the 120-residue chain is Putative cysteine proteinase inhibitor 11 (120 aa).

The N-terminal stretch at 1 to 24 (MARHPGLLLILLAAVAAVATTSRA) is a signal peptide. Residues 73–77 (QVVQG) carry the Secondary area of contact motif.

Belongs to the cystatin family. Phytocystatin subfamily.

The protein resides in the secreted. In terms of biological role, specific inhibitor of cysteine proteinases. Probably involved in the regulation of endogenous processes and in defense against pests and pathogens. In Oryza sativa subsp. japonica (Rice), this protein is Putative cysteine proteinase inhibitor 11.